Here is a 224-residue protein sequence, read N- to C-terminus: CMRF35-like molecule 6 (224 aa).

The first 20 residues, M1–P20, serve as a signal peptide directing secretion. The Extracellular segment spans residues G21 to R183. An Ig-like V-type domain is found at Y22 to S130. 2 cysteine pairs are disulfide-bonded: C43-C110 and C57-C65. 2 N-linked (GlcNAc...) asparagine glycosylation sites follow: N90 and N99. Over residues T136–P151 the composition is skewed to polar residues. The tract at residues T136–H174 is disordered. The helical transmembrane segment at F184–W204 threads the bilayer. The Cytoplasmic portion of the chain corresponds to V205–Q224.

The protein belongs to the CD300 family. In terms of tissue distribution, present on the surface of monocytes, neutrophils, a proportion of peripheral blood T- and B-lymphocytes and lymphocytic cell lines.

It localises to the cell membrane. The polypeptide is CMRF35-like molecule 6 (CD300C) (Homo sapiens (Human)).